Here is a 233-residue protein sequence, read N- to C-terminus: 7-cyano-7-deazaguanine synthase 2 (233 aa).

Position 8–18 (8–18 (LSGGLDSTTCM)) interacts with ATP. Zn(2+) is bound by residues Cys-186, Cys-194, Cys-197, and Cys-200.

This sequence belongs to the QueC family. In terms of assembly, homodimer. Zn(2+) serves as cofactor.

It carries out the reaction 7-carboxy-7-deazaguanine + NH4(+) + ATP = 7-cyano-7-deazaguanine + ADP + phosphate + H2O + H(+). It functions in the pathway purine metabolism; 7-cyano-7-deazaguanine biosynthesis. Its function is as follows. Catalyzes the ATP-dependent conversion of 7-carboxy-7-deazaguanine (CDG) to 7-cyano-7-deazaguanine (preQ(0)). The chain is 7-cyano-7-deazaguanine synthase 2 from Desulfitobacterium hafniense (strain Y51).